We begin with the raw amino-acid sequence, 234 residues long: tRNA (guanine-N(1)-)-methyltransferase (234 aa).

Gly113 contacts S-adenosyl-L-methionine.

Belongs to the RNA methyltransferase TrmD family. As to quaternary structure, homodimer.

It is found in the cytoplasm. It carries out the reaction guanosine(37) in tRNA + S-adenosyl-L-methionine = N(1)-methylguanosine(37) in tRNA + S-adenosyl-L-homocysteine + H(+). Specifically methylates guanosine-37 in various tRNAs. This is tRNA (guanine-N(1)-)-methyltransferase from Gluconobacter oxydans (strain 621H) (Gluconobacter suboxydans).